Here is a 159-residue protein sequence, read N- to C-terminus: NADH-quinone oxidoreductase subunit I (159 aa).

2 consecutive 4Fe-4S ferredoxin-type domains span residues 51–80 (RRYE…IESD) and 90–119 (TRYD…EGPN). [4Fe-4S] cluster is bound by residues cysteine 60, cysteine 63, cysteine 66, cysteine 70, cysteine 99, cysteine 102, cysteine 105, and cysteine 109.

Belongs to the complex I 23 kDa subunit family. NDH-1 is composed of 14 different subunits. Subunits NuoA, H, J, K, L, M, N constitute the membrane sector of the complex. The cofactor is [4Fe-4S] cluster.

It is found in the cell inner membrane. The catalysed reaction is a quinone + NADH + 5 H(+)(in) = a quinol + NAD(+) + 4 H(+)(out). In terms of biological role, NDH-1 shuttles electrons from NADH, via FMN and iron-sulfur (Fe-S) centers, to quinones in the respiratory chain. The immediate electron acceptor for the enzyme in this species is believed to be ubiquinone. Couples the redox reaction to proton translocation (for every two electrons transferred, four hydrogen ions are translocated across the cytoplasmic membrane), and thus conserves the redox energy in a proton gradient. The chain is NADH-quinone oxidoreductase subunit I from Rickettsia prowazekii (strain Madrid E).